A 193-amino-acid polypeptide reads, in one-letter code: Large ribosomal subunit protein eL19A (193 aa).

Positions 156–179 (QEQQDARRARAKAARQRRAKAVEE) are disordered. Over residues 164–174 (ARAKAARQRRA) the composition is skewed to basic residues.

Belongs to the eukaryotic ribosomal protein eL19 family. In terms of assembly, component of the large ribosomal subunit (LSU). Mature yeast ribosomes consist of a small (40S) and a large (60S) subunit. The 40S small subunit contains 1 molecule of ribosomal RNA (18S rRNA) and at least 33 different proteins. The large 60S subunit contains 3 rRNA molecules (25S, 5.8S and 5S rRNA) and at least 46 different proteins. eL19 lies in close proximity to the binding site for eukaryotic initiation factor eIF4G.

The protein localises to the cytoplasm. Functionally, component of the ribosome, a large ribonucleoprotein complex responsible for the synthesis of proteins in the cell. The small ribosomal subunit (SSU) binds messenger RNAs (mRNAs) and translates the encoded message by selecting cognate aminoacyl-transfer RNA (tRNA) molecules. The large subunit (LSU) contains the ribosomal catalytic site termed the peptidyl transferase center (PTC), which catalyzes the formation of peptide bonds, thereby polymerizing the amino acids delivered by tRNAs into a polypeptide chain. The nascent polypeptides leave the ribosome through a tunnel in the LSU and interact with protein factors that function in enzymatic processing, targeting, and the membrane insertion of nascent chains at the exit of the ribosomal tunnel. eL19 may play a role in the last stages of translation initiation, in particular subunit joining and shedding/releasing factors. The protein is Large ribosomal subunit protein eL19A (rpl1901) of Schizosaccharomyces pombe (strain 972 / ATCC 24843) (Fission yeast).